We begin with the raw amino-acid sequence, 380 residues long: Putative 8-amino-7-oxononanoate synthase (380 aa).

Arg-18 lines the substrate pocket. Residue 106–107 (GY) participates in pyridoxal 5'-phosphate binding. A substrate-binding site is contributed by His-131. Pyridoxal 5'-phosphate-binding positions include Ser-179, 205 to 208 (DEAH), and 236 to 239 (TFGK). The residue at position 239 (Lys-239) is an N6-(pyridoxal phosphate)lysine. Thr-352 contributes to the substrate binding site.

The protein belongs to the class-II pyridoxal-phosphate-dependent aminotransferase family. BioF subfamily. In terms of assembly, homodimer. Requires pyridoxal 5'-phosphate as cofactor.

The enzyme catalyses 6-carboxyhexanoyl-[ACP] + L-alanine + H(+) = (8S)-8-amino-7-oxononanoate + holo-[ACP] + CO2. It participates in cofactor biosynthesis; biotin biosynthesis. Its function is as follows. Catalyzes the decarboxylative condensation of pimeloyl-[acyl-carrier protein] and L-alanine to produce 8-amino-7-oxononanoate (AON), [acyl-carrier protein], and carbon dioxide. The chain is Putative 8-amino-7-oxononanoate synthase (bioF) from Neisseria meningitidis serogroup C (strain 053442).